A 308-amino-acid chain; its full sequence is Malonyl CoA-acyl carrier protein transacylase (308 aa).

Active-site residues include Ser89 and His199.

It belongs to the FabD family.

The catalysed reaction is holo-[ACP] + malonyl-CoA = malonyl-[ACP] + CoA. It participates in lipid metabolism; fatty acid biosynthesis. The protein is Malonyl CoA-acyl carrier protein transacylase (fabD) of Staphylococcus aureus (strain MRSA252).